Reading from the N-terminus, the 187-residue chain is Large ribosomal subunit protein bL17 (187 aa).

Belongs to the bacterial ribosomal protein bL17 family. In terms of assembly, part of the 50S ribosomal subunit. Contacts protein L32.

In Rhodococcus opacus (strain B4), this protein is Large ribosomal subunit protein bL17.